The primary structure comprises 310 residues: Bifunctional protein FolD 3, chloroplastic (310 aa).

A chloroplast-targeting transit peptide spans 1 to 48 (MFTDCSSSTTSRLIHLYNRNGVFLPRPSVSQFSLRTTASTWRCTLSIR).

It belongs to the tetrahydrofolate dehydrogenase/cyclohydrolase family. In terms of assembly, homodimer.

The protein resides in the plastid. The protein localises to the chloroplast. The catalysed reaction is (6R)-5,10-methylene-5,6,7,8-tetrahydrofolate + NADP(+) = (6R)-5,10-methenyltetrahydrofolate + NADPH. The enzyme catalyses (6R)-5,10-methenyltetrahydrofolate + H2O = (6R)-10-formyltetrahydrofolate + H(+). It functions in the pathway one-carbon metabolism; tetrahydrofolate interconversion. Functionally, catalyzes the oxidation of 5,10-methylenetetrahydrofolate to 5,10-methenyltetrahydrofolate and then the hydrolysis of 5,10-methenyltetrahydrofolate to 10-formyltetrahydrofolate. The protein is Bifunctional protein FolD 3, chloroplastic (FOLD3) of Arabidopsis thaliana (Mouse-ear cress).